A 480-amino-acid polypeptide reads, in one-letter code: UDP-glycosyltransferase 72B1 (480 aa).

His-19 acts as the Proton acceptor in catalysis. Residue Asp-117 is the Charge relay of the active site. The UDP site is built by Ser-277, Trp-346, Ala-347, and His-364. Residues Ser-277, Trp-346, Ala-347, His-364, Trp-367, Asn-368, Ser-369, Glu-372, Tyr-386, Glu-388, and Gln-389 each contribute to the UDP-alpha-D-glucose site. UDP contacts are provided by Asn-368, Ser-369, Glu-372, and Tyr-386.

It belongs to the UDP-glycosyltransferase family.

The enzyme catalyses hydroquinone + UDP-alpha-D-glucose = hydroquinone O-beta-D-glucopyranoside + UDP + H(+). Bifunctional O-glycosyltransferase and N-glycosyltransferase that can detoxify xenobiotics. Possesses high activity to metabolize the persistent pollutants 2,4,5-trichlorophenol (TCP) and 3,4-dichloroaniline (DCA). Also active on benzoates and benzoate derivatives in vitro. The chain is UDP-glycosyltransferase 72B1 (UGT72B1) from Arabidopsis thaliana (Mouse-ear cress).